The sequence spans 77 residues: ATP synthase subunit c (77 aa).

Transmembrane regions (helical) follow at residues 10-30 (IAVA…FGNM) and 57-77 (GLID…LFVL).

This sequence belongs to the ATPase C chain family. In terms of assembly, F-type ATPases have 2 components, F(1) - the catalytic core - and F(0) - the membrane proton channel. F(1) has five subunits: alpha(3), beta(3), gamma(1), delta(1), epsilon(1). F(0) has three main subunits: a(1), b(2) and c(10-14). The alpha and beta chains form an alternating ring which encloses part of the gamma chain. F(1) is attached to F(0) by a central stalk formed by the gamma and epsilon chains, while a peripheral stalk is formed by the delta and b chains.

Its subcellular location is the cell inner membrane. In terms of biological role, f(1)F(0) ATP synthase produces ATP from ADP in the presence of a proton or sodium gradient. F-type ATPases consist of two structural domains, F(1) containing the extramembraneous catalytic core and F(0) containing the membrane proton channel, linked together by a central stalk and a peripheral stalk. During catalysis, ATP synthesis in the catalytic domain of F(1) is coupled via a rotary mechanism of the central stalk subunits to proton translocation. Functionally, key component of the F(0) channel; it plays a direct role in translocation across the membrane. A homomeric c-ring of between 10-14 subunits forms the central stalk rotor element with the F(1) delta and epsilon subunits. This Pseudoalteromonas translucida (strain TAC 125) protein is ATP synthase subunit c.